The primary structure comprises 361 residues: UDP-N-acetylglucosamine--N-acetylmuramyl-(pentapeptide) pyrophosphoryl-undecaprenol N-acetylglucosamine transferase (361 aa).

UDP-N-acetyl-alpha-D-glucosamine-binding positions include 12 to 14 (TGG), Asn-123, Arg-166, Ser-192, and Gln-293.

Belongs to the glycosyltransferase 28 family. MurG subfamily.

The protein resides in the cell inner membrane. It carries out the reaction di-trans,octa-cis-undecaprenyl diphospho-N-acetyl-alpha-D-muramoyl-L-alanyl-D-glutamyl-meso-2,6-diaminopimeloyl-D-alanyl-D-alanine + UDP-N-acetyl-alpha-D-glucosamine = di-trans,octa-cis-undecaprenyl diphospho-[N-acetyl-alpha-D-glucosaminyl-(1-&gt;4)]-N-acetyl-alpha-D-muramoyl-L-alanyl-D-glutamyl-meso-2,6-diaminopimeloyl-D-alanyl-D-alanine + UDP + H(+). It participates in cell wall biogenesis; peptidoglycan biosynthesis. Cell wall formation. Catalyzes the transfer of a GlcNAc subunit on undecaprenyl-pyrophosphoryl-MurNAc-pentapeptide (lipid intermediate I) to form undecaprenyl-pyrophosphoryl-MurNAc-(pentapeptide)GlcNAc (lipid intermediate II). The polypeptide is UDP-N-acetylglucosamine--N-acetylmuramyl-(pentapeptide) pyrophosphoryl-undecaprenol N-acetylglucosamine transferase (Caulobacter vibrioides (strain ATCC 19089 / CIP 103742 / CB 15) (Caulobacter crescentus)).